We begin with the raw amino-acid sequence, 142 residues long: Cytochrome c-type biogenesis protein CcmE (142 aa).

The Cytoplasmic segment spans residues 1–2 (MK). Residues 3-23 (GKYLLGILVILGALGYMVFGG) form a helical; Signal-anchor for type II membrane protein membrane-spanning segment. The Periplasmic segment spans residues 24 to 142 (LGRNLVYFLT…EVRKLIEEAQ (119 aa)). Heme-binding residues include H118 and Y122.

Belongs to the CcmE/CycJ family.

It localises to the cell inner membrane. Heme chaperone required for the biogenesis of c-type cytochromes. Transiently binds heme delivered by CcmC and transfers the heme to apo-cytochromes in a process facilitated by CcmF and CcmH. The chain is Cytochrome c-type biogenesis protein CcmE from Thermus thermophilus (strain ATCC BAA-163 / DSM 7039 / HB27).